A 315-amino-acid polypeptide reads, in one-letter code: ADP-L-glycero-D-manno-heptose-6-epimerase (315 aa).

Residues 10–11 (FI), 31–32 (DD), Lys-38, Lys-53, 76–80 (QGACS), and Asn-93 each bind NADP(+). Tyr-140 acts as the Proton acceptor in catalysis. Lys-144 is a binding site for NADP(+). Asn-169 serves as a coordination point for substrate. Val-170 and Lys-178 together coordinate NADP(+). Catalysis depends on Lys-178, which acts as the Proton acceptor. Substrate contacts are provided by residues Ser-180, His-187, 201-204 (FEGC), Arg-214, and Tyr-278.

This sequence belongs to the NAD(P)-dependent epimerase/dehydratase family. HldD subfamily. As to quaternary structure, homopentamer. Requires NADP(+) as cofactor.

It catalyses the reaction ADP-D-glycero-beta-D-manno-heptose = ADP-L-glycero-beta-D-manno-heptose. Its pathway is nucleotide-sugar biosynthesis; ADP-L-glycero-beta-D-manno-heptose biosynthesis; ADP-L-glycero-beta-D-manno-heptose from D-glycero-beta-D-manno-heptose 7-phosphate: step 4/4. Functionally, catalyzes the interconversion between ADP-D-glycero-beta-D-manno-heptose and ADP-L-glycero-beta-D-manno-heptose via an epimerization at carbon 6 of the heptose. The chain is ADP-L-glycero-D-manno-heptose-6-epimerase from Syntrophotalea carbinolica (strain DSM 2380 / NBRC 103641 / GraBd1) (Pelobacter carbinolicus).